We begin with the raw amino-acid sequence, 243 residues long: Peptidase E (243 aa).

Residues S118, D133, and H155 each act as charge relay system in the active site.

It belongs to the peptidase S51 family.

It localises to the cytoplasm. The catalysed reaction is Dipeptidase E catalyzes the hydrolysis of dipeptides Asp-|-Xaa. It does not act on peptides with N-terminal Glu, Asn or Gln, nor does it cleave isoaspartyl peptides.. Functionally, hydrolyzes dipeptides containing N-terminal aspartate residues. May play a role in allowing the cell to use peptide aspartate to spare carbon otherwise required for the synthesis of the aspartate family of amino acids. The chain is Peptidase E from Streptomyces coelicolor (strain ATCC BAA-471 / A3(2) / M145).